A 155-amino-acid chain; its full sequence is Small ribosomal subunit protein uS7cz/uS7cy (155 aa).

This sequence belongs to the universal ribosomal protein uS7 family. Part of the 30S ribosomal subunit.

The protein resides in the plastid. It is found in the chloroplast. One of the primary rRNA binding proteins, it binds directly to 16S rRNA where it nucleates assembly of the head domain of the 30S subunit. The polypeptide is Small ribosomal subunit protein uS7cz/uS7cy (rps7-A) (Pelargonium hortorum (Common geranium)).